Reading from the N-terminus, the 273-residue chain is Ribosomal RNA small subunit methyltransferase A (273 aa).

Positions 20, 22, 47, 68, 90, and 110 each coordinate S-adenosyl-L-methionine.

This sequence belongs to the class I-like SAM-binding methyltransferase superfamily. rRNA adenine N(6)-methyltransferase family. RsmA subfamily.

The protein resides in the cytoplasm. The enzyme catalyses adenosine(1518)/adenosine(1519) in 16S rRNA + 4 S-adenosyl-L-methionine = N(6)-dimethyladenosine(1518)/N(6)-dimethyladenosine(1519) in 16S rRNA + 4 S-adenosyl-L-homocysteine + 4 H(+). In terms of biological role, specifically dimethylates two adjacent adenosines (A1518 and A1519) in the loop of a conserved hairpin near the 3'-end of 16S rRNA in the 30S particle. May play a critical role in biogenesis of 30S subunits. This is Ribosomal RNA small subunit methyltransferase A from Chlorobium luteolum (strain DSM 273 / BCRC 81028 / 2530) (Pelodictyon luteolum).